The primary structure comprises 573 residues: Sulfite reductase [NADPH] hemoprotein beta-component (573 aa).

Cys-438, Cys-444, Cys-483, and Cys-487 together coordinate [4Fe-4S] cluster. Cys-487 provides a ligand contact to siroheme.

Belongs to the nitrite and sulfite reductase 4Fe-4S domain family. In terms of assembly, alpha(8)-beta(8). The alpha component is a flavoprotein, the beta component is a hemoprotein. The cofactor is siroheme. It depends on [4Fe-4S] cluster as a cofactor.

It catalyses the reaction hydrogen sulfide + 3 NADP(+) + 3 H2O = sulfite + 3 NADPH + 4 H(+). It functions in the pathway sulfur metabolism; hydrogen sulfide biosynthesis; hydrogen sulfide from sulfite (NADPH route): step 1/1. Functionally, component of the sulfite reductase complex that catalyzes the 6-electron reduction of sulfite to sulfide. This is one of several activities required for the biosynthesis of L-cysteine from sulfate. This Shouchella clausii (strain KSM-K16) (Alkalihalobacillus clausii) protein is Sulfite reductase [NADPH] hemoprotein beta-component.